We begin with the raw amino-acid sequence, 212 residues long: Deoxyribose-phosphate aldolase (212 aa).

Asp90 functions as the Proton donor/acceptor in the catalytic mechanism. Catalysis depends on Lys151, which acts as the Schiff-base intermediate with acetaldehyde. Lys176 functions as the Proton donor/acceptor in the catalytic mechanism.

Belongs to the DeoC/FbaB aldolase family. DeoC type 1 subfamily.

It is found in the cytoplasm. The catalysed reaction is 2-deoxy-D-ribose 5-phosphate = D-glyceraldehyde 3-phosphate + acetaldehyde. The protein operates within carbohydrate degradation; 2-deoxy-D-ribose 1-phosphate degradation; D-glyceraldehyde 3-phosphate and acetaldehyde from 2-deoxy-alpha-D-ribose 1-phosphate: step 2/2. In terms of biological role, catalyzes a reversible aldol reaction between acetaldehyde and D-glyceraldehyde 3-phosphate to generate 2-deoxy-D-ribose 5-phosphate. This is Deoxyribose-phosphate aldolase from Halobacterium salinarum (strain ATCC 29341 / DSM 671 / R1).